The chain runs to 114 residues: Large ribosomal subunit protein uL18 (114 aa).

The protein belongs to the universal ribosomal protein uL18 family. Part of the 50S ribosomal subunit; part of the 5S rRNA/L5/L18/L25 subcomplex. Contacts the 23S rRNA. Contacts protein L27 and the 5S rRNA.

Its function is as follows. This is one of the proteins that bind and probably mediate the attachment of the 5S RNA into the large ribosomal subunit, where it forms part of the central protuberance. The sequence is that of Large ribosomal subunit protein uL18 (rplR) from Deinococcus radiodurans (strain ATCC 13939 / DSM 20539 / JCM 16871 / CCUG 27074 / LMG 4051 / NBRC 15346 / NCIMB 9279 / VKM B-1422 / R1).